Consider the following 342-residue polypeptide: 4-hydroxy-2-oxovalerate aldolase (342 aa).

The region spanning 7 to 259 (ILVHDMSLRD…CTGVDLGRIQ (253 aa)) is the Pyruvate carboxyltransferase domain. 15 to 16 (RD) lines the substrate pocket. A Mn(2+)-binding site is contributed by Asp-16. The Proton acceptor role is filled by His-19. Substrate is bound by residues Ser-169 and His-198. Residues His-198 and His-200 each coordinate Mn(2+). Tyr-289 provides a ligand contact to substrate.

It belongs to the 4-hydroxy-2-oxovalerate aldolase family.

The catalysed reaction is (S)-4-hydroxy-2-oxopentanoate = acetaldehyde + pyruvate. The polypeptide is 4-hydroxy-2-oxovalerate aldolase (Alkalilimnicola ehrlichii (strain ATCC BAA-1101 / DSM 17681 / MLHE-1)).